The chain runs to 572 residues: Arginine--tRNA ligase (572 aa).

Residues 122 to 132 carry the 'HIGH' region motif; it reads PNLAKEMHVGH.

This sequence belongs to the class-I aminoacyl-tRNA synthetase family. As to quaternary structure, monomer.

Its subcellular location is the cytoplasm. It catalyses the reaction tRNA(Arg) + L-arginine + ATP = L-arginyl-tRNA(Arg) + AMP + diphosphate. The protein is Arginine--tRNA ligase of Neisseria meningitidis serogroup A / serotype 4A (strain DSM 15465 / Z2491).